Reading from the N-terminus, the 138-residue chain is MSTTGKGGKAKGKTASSKQVSRSARAGLQFPVGRISRFLKHGRYSERIGTGAPVYLAAVLEYLAAEVLELAGNAAKDNKKTRIVPRHILLAIRNDEELNKLMANTTIADGGVLPNINPMLLPSKSKKTESRGQASQDI.

Residues 1–23 form a disordered region; that stretch reads MSTTGKGGKAKGKTASSKQVSRS. Serine 2 is subject to N-acetylserine. N6-acetyllysine occurs at positions 6, 9, 11, 13, and 18. Serine 123 is modified (phosphoserine). Lysine 124 is covalently cross-linked (Glycyl lysine isopeptide (Lys-Gly) (interchain with G-Cter in ubiquitin)). A phosphoserine mark is found at serine 125, serine 130, and serine 135. Positions 135-136 match the [ST]-Q motif motif; sequence SQ.

Belongs to the histone H2A family. In terms of assembly, the nucleosome is a histone octamer containing two molecules each of H2A, H2B, H3 and H4 assembled in one H3-H4 heterotetramer and two H2A-H2B heterodimers. The octamer wraps approximately 147 bp of DNA. Monoubiquitination of Lys-124 gives a specific tag for epigenetic transcriptional repression. In terms of processing, acetylation occurs almost exclusively in the MAC.

The protein resides in the nucleus. It is found in the chromosome. Functionally, core component of nucleosome. Nucleosomes wrap and compact DNA into chromatin, limiting DNA accessibility to the cellular machineries which require DNA as a template. Histones thereby play a central role in transcription regulation, DNA repair, DNA replication and chromosomal stability. DNA accessibility is regulated via a complex set of post-translational modifications of histones, also called histone code, and nucleosome remodeling. This Tetrahymena pyriformis protein is Histone H2AX (HTA1).